Reading from the N-terminus, the 79-residue chain is D-alanyl carrier protein (79 aa).

In terms of domain architecture, Carrier spans 1-76; sequence MEEQVLSLLE…RVMAYVKKRV (76 aa). Residue Ser34 is modified to O-(pantetheine 4'-phosphoryl)serine.

The protein belongs to the DltC family. In terms of processing, 4'-phosphopantetheine is transferred from CoA to a specific serine of apo-DCP.

Its subcellular location is the cytoplasm. It functions in the pathway cell wall biogenesis; lipoteichoic acid biosynthesis. Its function is as follows. Carrier protein involved in the D-alanylation of lipoteichoic acid (LTA). The loading of thioester-linked D-alanine onto DltC is catalyzed by D-alanine--D-alanyl carrier protein ligase DltA. The DltC-carried D-alanyl group is further transferred to cell membrane phosphatidylglycerol (PG) by forming an ester bond, probably catalyzed by DltD. D-alanylation of LTA plays an important role in modulating the properties of the cell wall in Gram-positive bacteria, influencing the net charge of the cell wall. The sequence is that of D-alanyl carrier protein from Abiotrophia defectiva (Streptococcus defectivus).